The following is a 529-amino-acid chain: Auxin response factor 13 (529 aa).

The interval 1 to 22 is disordered; it reads MARPPAATAPPPPPPPPPPPPP. Residues 7–22 show a composition bias toward pro residues; the sequence is ATAPPPPPPPPPPPPP. The TF-B3 DNA-binding region spans 128-234; that stretch reads YAKQLTQSDA…KLLVGVRRAA (107 aa). 2 disordered regions span residues 443–462 and 497–529; these read IVTP…PLSA and PEGV…GARL. The span at 444–461 shows a compositional bias: polar residues; that stretch reads VTPQNGSPPDNPVNTPLS. Acidic residues predominate over residues 499–510; that stretch reads GVDDETATEEAS. Polar residues predominate over residues 511–523; it reads DTSLPDSLTNGHN.

It belongs to the ARF family. In terms of assembly, homo and heterodimers. As to expression, expressed in roots, culms, leaves and young panicles.

It localises to the nucleus. Auxin response factors (ARFs) are transcriptional factors that bind specifically to the DNA sequence 5'-TGTCTC-3' found in the auxin-responsive promoter elements (AuxREs). The sequence is that of Auxin response factor 13 (ARF13) from Oryza sativa subsp. japonica (Rice).